The following is a 76-amino-acid chain: UPF0248 protein MmarC7_1289 (76 aa).

Belongs to the UPF0248 family.

This Methanococcus maripaludis (strain C7 / ATCC BAA-1331) protein is UPF0248 protein MmarC7_1289.